The sequence spans 790 residues: Probable copper-transporting ATPase SynA (790 aa).

The Cytoplasmic segment spans residues 1–105 (MPAAIVHSAD…IPPLQQQRLQ (105 aa)). The HMA domain occupies 14 to 81 (TSILVEVEGM…EITGLGFRAQ (68 aa)). 2 residues coordinate Cu cation: Cys25 and Cys28. Residues 106–125 (LAIAAFLLIVSSWGHLGHWL) form a helical membrane-spanning segment. Residues 126–134 (DHPLPGTDQ) lie on the Extracellular side of the membrane. Residues 135 to 154 (LWFHALLAIWALLGPGRSIL) traverse the membrane as a helical segment. At 155 to 166 (QAGWQGLRCGAP) the chain is on the cytoplasmic side. Residues 167–189 (NMNSLVLLGTGSAYLASLVALLW) traverse the membrane as a helical segment. The Extracellular segment spans residues 190 to 193 (PQLG). The helical transmembrane segment at 194 to 211 (WVCFLDEPVMLLGFILLG) threads the bilayer. At 212–357 (RTLEEQARFR…RKAPVQRFAD (146 aa)) the chain is on the cytoplasmic side. The chain crosses the membrane as a helical span at residues 358–380 (AIAGRFVYGVCAIAALTFGFWAT). The Extracellular portion of the chain corresponds to 381–416 (LGSRWWPQVLQQPLPGLLIHAPHHGMEMAHPHSHSP). Residues 417–439 (LLLALTLAISVLVVACPCALGLA) form a helical membrane-spanning segment. Topologically, residues 440–726 (TPTAILVATG…QMGLRTIRQN (287 aa)) are cytoplasmic. Residue Asp476 is the 4-aspartylphosphate intermediate of the active site. Asp669 and Asp673 together coordinate Mg(2+). A helical membrane pass occupies residues 727–749 (LTWALGYNVVMLPLAAGAFLPAY). Topologically, residues 750 to 753 (GLAL) are extracellular. A helical transmembrane segment spans residues 754–776 (TPAIAGACMAVSSLAVVSNSLLL). Residues 777 to 790 (RYWFRRSLNHSVSV) are Cytoplasmic-facing.

It belongs to the cation transport ATPase (P-type) (TC 3.A.3) family. Type IB subfamily.

Its subcellular location is the cell membrane. It carries out the reaction Cu(2+)(in) + ATP + H2O = Cu(2+)(out) + ADP + phosphate + H(+). In terms of biological role, involved in copper transport. This is Probable copper-transporting ATPase SynA (synA) from Synechococcus sp. (strain ATCC 27144 / PCC 6301 / SAUG 1402/1) (Anacystis nidulans).